Reading from the N-terminus, the 302-residue chain is Methionyl-tRNA formyltransferase (302 aa).

Residue 106–109 participates in (6S)-5,6,7,8-tetrahydrofolate binding; sequence SVLP.

The protein belongs to the Fmt family.

It carries out the reaction L-methionyl-tRNA(fMet) + (6R)-10-formyltetrahydrofolate = N-formyl-L-methionyl-tRNA(fMet) + (6S)-5,6,7,8-tetrahydrofolate + H(+). Its function is as follows. Attaches a formyl group to the free amino group of methionyl-tRNA(fMet). The formyl group appears to play a dual role in the initiator identity of N-formylmethionyl-tRNA by promoting its recognition by IF2 and preventing the misappropriation of this tRNA by the elongation apparatus. The sequence is that of Methionyl-tRNA formyltransferase from Hydrogenobaculum sp. (strain Y04AAS1).